We begin with the raw amino-acid sequence, 887 residues long: Phosphatidylinositol 3-kinase catalytic subunit type 3 (887 aa).

Residues 35 to 184 (YKAVLEDPML…LAKLTKAHRQ (150 aa)) form the C2 PI3K-type domain. Positions 149–170 (VEADGSEPTRTPGRTSSTLSED) are disordered. The span at 156 to 170 (PTRTPGRTSSTLSED) shows a compositional bias: polar residues. Residue Thr163 is modified to Phosphothreonine; by AMPK. Ser165 is modified (phosphoserine; by AMPK). Phosphoserine occurs at positions 244, 261, and 282. The region spanning 283-520 (DHDLKPNATT…PKTHEMYLNV (238 aa)) is the PIK helical domain. Residues 415 to 466 (LEPTKKDSQTSASESLSNSGVSSGDIDSSQIITNPLPPVASPPPASKAKEVS) form a disordered region. A compositionally biased stretch (low complexity) spans 425–437 (SASESLSNSGVSS). Pro residues predominate over residues 449-459 (PLPPVASPPPA). The PI3K/PI4K catalytic domain maps to 605–871 (IPETATLFKS…LIDESVHALF (267 aa)). A G-loop region spans residues 611 to 617 (LFKSALM). The interval 740–748 (GVGDRHLDN) is catalytic loop. Positions 759–780 (HIDFGYILGRDPKPLPPPMKLN) are activation loop.

Belongs to the PI3/PI4-kinase family. In terms of assembly, component of the PI3K (PI3KC3/PI3K-III/class III phosphatidylinositol 3-kinase) complex the core of which is composed of the catalytic subunit PIK3C3, the regulatory subunit PIK3R4 and BECN1 associating with additional regulatory/auxiliary subunits to form alternative complex forms. Alternative complex forms containing a fourth regulatory subunit in a mutually exclusive manner are: the PI3K complex I (PI3KC3-C1) containing ATG14, and the PI3K complex II (PI3KC3-C2) containing UVRAG. PI3KC3-C1 displays a V-shaped architecture with PIK3R4 serving as a bridge between PIK3C3 and the ATG14:BECN1 subcomplex. Both, PI3KC3-C1 and PI3KC3-C2, can associate with further regulatory subunits such as RUBCN, SH3GLB1/Bif-1 and AMBRA1. PI3KC3-C1 probably associates with PIK3CB. Interacts with RAB7A in the presence of PIK3R4. Interacts with AMBRA1. Interacts with BECN1P1/BECN2. Interacts with SLAMF1. May be a component of a complex composed of RAB5A (in GDP-bound form), DYN2 and PIK3C3. Interacts with NCKAP1L. Interacts with ATG14; this interaction is increased in the absence of TMEM39A. Interacts with STEEP1; the interaction is STING1-dependent and required for trafficking of STING1 from the endoplasmic reticulum. Interacts with YWHAG. Interacts with ARMC3. Requires Mn(2+) as cofactor. In terms of processing, ubiquitinated via 'Lys-29'- and 'Lys-48'-linked ubiquitination by UBE3C, promoting its degradation. Deubiquitination by ZRANB1/TRABID promotes its stabilization, leading to autophagosome maturation.

It is found in the midbody. The protein resides in the late endosome. Its subcellular location is the cytoplasmic vesicle. The protein localises to the autophagosome. It catalyses the reaction a 1,2-diacyl-sn-glycero-3-phospho-(1D-myo-inositol) + ATP = a 1,2-diacyl-sn-glycero-3-phospho-(1D-myo-inositol-3-phosphate) + ADP + H(+). Catalytic subunit of the PI3K complex that mediates formation of phosphatidylinositol 3-phosphate; different complex forms are believed to play a role in multiple membrane trafficking pathways: PI3KC3-C1 is involved in initiation of autophagosomes and PI3KC3-C2 in maturation of autophagosomes and endocytosis. As part of PI3KC3-C1, promotes endoplasmic reticulum membrane curvature formation prior to vesicle budding. Involved in regulation of degradative endocytic trafficking and required for the abscission step in cytokinesis, probably in the context of PI3KC3-C2. Involved in the transport of lysosomal enzyme precursors to lysosomes. Required for transport from early to late endosomes. This Mus musculus (Mouse) protein is Phosphatidylinositol 3-kinase catalytic subunit type 3.